Here is a 690-residue protein sequence, read N- to C-terminus: Serotransferrin (690 aa).

The signal sequence occupies residues 1-17 (MKPLLLLTLLGCLAAAL). 2 Transferrin-like domains span residues 24-329 (VKWC…SLKK) and 340-670 (IKWC…SLRK). Cys-27 and Cys-49 form a disulfide bridge. 2 residues coordinate Fe(3+): Asp-73 and Tyr-103. Disulfide bonds link Cys-126–Cys-206, Cys-171–Cys-185, and Cys-234–Cys-248. The hydrogencarbonate site is built by Thr-128, Lys-132, Ala-134, and Gly-135. Tyr-200 contributes to the Fe(3+) binding site. His-256 contributes to the Fe(3+) binding site. 2 disulfides stabilise this stretch: Cys-343/Cys-379 and Cys-353/Cys-370. Fe(3+) contacts are provided by Asp-394 and Tyr-429. 7 disulfide bridges follow: Cys-404–Cys-682, Cys-419–Cys-643, Cys-452–Cys-530, Cys-476–Cys-671, Cys-486–Cys-499, Cys-496–Cys-513, and Cys-570–Cys-584. Hydrogencarbonate is bound by residues Thr-454, Arg-458, Ala-460, and Gly-461. Tyr-524 is a binding site for Fe(3+). His-592 provides a ligand contact to Fe(3+).

The protein belongs to the transferrin family. In terms of assembly, monomer.

It is found in the secreted. Functionally, transferrins are iron binding transport proteins which can bind two Fe(3+) ions in association with the binding of an anion, usually bicarbonate. The chain is Serotransferrin (tf) from Oryzias latipes (Japanese rice fish).